The sequence spans 161 residues: Lipoprotein signal peptidase (161 aa).

3 helical membrane-spanning segments follow: residues L4–Y24, K61–I81, and S87–D107. Active-site residues include D116 and D132. Residues I127–I147 form a helical membrane-spanning segment.

Belongs to the peptidase A8 family.

It is found in the cell membrane. It carries out the reaction Release of signal peptides from bacterial membrane prolipoproteins. Hydrolyzes -Xaa-Yaa-Zaa-|-(S,diacylglyceryl)Cys-, in which Xaa is hydrophobic (preferably Leu), and Yaa (Ala or Ser) and Zaa (Gly or Ala) have small, neutral side chains.. It functions in the pathway protein modification; lipoprotein biosynthesis (signal peptide cleavage). Its function is as follows. This protein specifically catalyzes the removal of signal peptides from prolipoproteins. This is Lipoprotein signal peptidase from Enterococcus faecalis (strain ATCC 700802 / V583).